The following is a 346-amino-acid chain: MTVVIPEYITPLIPWVRGIVGLVLIGVIFMGAMGAVWLERKLSADIQTRMGPCRVGKYGLLQLVADAIKLFTKEDLKPLNADSLLFNNANIFMLGSVFLMLVALPVGAVFINGVEYPLAVTQMDISVLYIEAVSALSIFGIFMVAYGSNNKYSLLGAFRNFARMVGYEVPLGITVISVAAMTGSLNIVDISTAQGLHWNIFLQPLGCFVFFVSLMADMGRLPFDQNESEEELIAGWITEYCGMRFGLGFFAEYIHMILGSFLVALLFLGGWNVPGFIANNSFFGIIVPTGFLIVKVVFVLMVIIGLRWAVPRFRIDQVVDLSWKKLLPLALLNLVWAVGLGLYLGA.

8 helical membrane passes run 18 to 38 (GIVGLVLIGVIFMGAMGAVWL), 91 to 111 (IFMLGSVFLMLVALPVGAVFI), 125 to 145 (ISVLYIEAVSALSIFGIFMVA), 170 to 190 (PLGITVISVAAMTGSLNIVDI), 196 to 216 (LHWNIFLQPLGCFVFFVSLMA), 257 to 277 (ILGSFLVALLFLGGWNVPGFI), 284 to 304 (GIIVPTGFLIVKVVFVLMVII), and 326 to 346 (LLPLALLNLVWAVGLGLYLGA).

It belongs to the complex I subunit 1 family. The FPO complex is composed of at least 13 different subunits. FpoA, FpoH, FpoJ, FpoK, FpoL, FpoM and FpoN proteins constitute the membrane sector of the complex.

Its subcellular location is the cell membrane. The catalysed reaction is methanophenazine + reduced coenzyme F420-(gamma-L-Glu)(n) = dihydromethanophenazine + oxidized coenzyme F420-(gamma-L-Glu)(n) + H(+). Its function is as follows. Component of the F(420)H(2) dehydrogenase (FPO complex) which is part of the energy-conserving F(420)H(2):heterodisulfide oxidoreductase system. The membrane-bound electron transfer system of the complex plays an important role in the metabolism of methylotrophic methanogens when the organisms grow on methanol or methylamines. Catalyzes the oxidation of methanophenazine to dihydromethanophenazine. It shuttles electrons from F(420)H(2), via FAD and iron-sulfur (Fe-S) centers, to methanophenazine (an electron carrier in the membrane). It couples the redox reaction to proton translocation (for every two electrons transferred, two hydrogen ions are translocated across the cytoplasmic membrane), and thus conserves the redox energy in a proton gradient. The chain is F(420)H(2) dehydrogenase subunit H from Methanosarcina barkeri (strain Fusaro / DSM 804).